We begin with the raw amino-acid sequence, 189 residues long: Peptidyl-tRNA hydrolase (189 aa).

Y15 lines the tRNA pocket. H20 serves as the catalytic Proton acceptor. TRNA contacts are provided by F66, N68, and N114.

The protein belongs to the PTH family. As to quaternary structure, monomer.

Its subcellular location is the cytoplasm. It catalyses the reaction an N-acyl-L-alpha-aminoacyl-tRNA + H2O = an N-acyl-L-amino acid + a tRNA + H(+). Functionally, hydrolyzes ribosome-free peptidyl-tRNAs (with 1 or more amino acids incorporated), which drop off the ribosome during protein synthesis, or as a result of ribosome stalling. In terms of biological role, catalyzes the release of premature peptidyl moieties from peptidyl-tRNA molecules trapped in stalled 50S ribosomal subunits, and thus maintains levels of free tRNAs and 50S ribosomes. The protein is Peptidyl-tRNA hydrolase of Streptococcus pneumoniae (strain JJA).